The following is a 245-amino-acid chain: MNVILLIPARYGSSRFPGKPLAPINGKPMIQHVYERASLAKGLTNIYVATDDERIKATVEGFGGKVVMTSPDAASGTDRINEAIKLLGLKDDDLVINVQGDQPLIDPTAIEQLINLFERQPGEFEMATLGYEIVNKADIDDPMQVKMVFDNNYYALYFSRSRIPFGRDTQDYPVFKHLGIYAYTSKFVQTFAALPLGRLEDLEKLEQLRALEHGHKIKIAISASNSLEVDRPEDIHKCEQRLAAG.

The protein belongs to the KdsB family.

The protein resides in the cytoplasm. The catalysed reaction is 8-amino-3,8-dideoxy-alpha-D-manno-octulosonate + CTP = CMP-8-amino-3,8-dideoxy-alpha-D-manno-oct-2-ulosonate + diphosphate. The protein operates within bacterial outer membrane biogenesis; lipopolysaccharide biosynthesis. In terms of biological role, activates KDO8N (a required 8-carbon sugar) for incorporation into bacterial lipopolysaccharide in the Shewanella genus. This is 8-amino-3,8-dideoxy-manno-octulosonate cytidylyltransferase from Shewanella sp. (strain W3-18-1).